We begin with the raw amino-acid sequence, 463 residues long: Abscisic acid 8'-hydroxylase 3 (463 aa).

Residues 6-26 (LFLTLSAAALFLCLLRFIAGV) form a helical membrane-spanning segment. C411 is a binding site for heme.

This sequence belongs to the cytochrome P450 family. It depends on heme as a cofactor. As to expression, mainly expressed in flower buds, flowers, rosette leaves and roots. Lower expression in mature siliques and inflorescence stems. Not expressed in dry seeds.

Its subcellular location is the membrane. It catalyses the reaction 2-cis-(+)-abscisate + reduced [NADPH--hemoprotein reductase] + O2 = (+)-8'-hydroxyabscisate + oxidized [NADPH--hemoprotein reductase] + H2O + H(+). The protein operates within plant hormone degradation; abscisic acid degradation. Its activity is regulated as follows. Inhibited by tetcyclcis, but not by metyrapone. Its function is as follows. Involved in the oxidative degradation of abscisic acid, but not in the isomerization of the produced 8'-hydroxyabscisic acid (8'-OH-ABA) to (-)-phaseic acid (PA). Involved in the control of postgermination growth. The sequence is that of Abscisic acid 8'-hydroxylase 3 (CYP707A3) from Arabidopsis thaliana (Mouse-ear cress).